Consider the following 481-residue polypeptide: Proline--tRNA ligase (481 aa).

This sequence belongs to the class-II aminoacyl-tRNA synthetase family. ProS type 3 subfamily. As to quaternary structure, homodimer.

The protein resides in the cytoplasm. It carries out the reaction tRNA(Pro) + L-proline + ATP = L-prolyl-tRNA(Pro) + AMP + diphosphate. Its function is as follows. Catalyzes the attachment of proline to tRNA(Pro) in a two-step reaction: proline is first activated by ATP to form Pro-AMP and then transferred to the acceptor end of tRNA(Pro). The polypeptide is Proline--tRNA ligase (Chlorobium luteolum (strain DSM 273 / BCRC 81028 / 2530) (Pelodictyon luteolum)).